The following is a 1050-amino-acid chain: Ankyrin repeat domain-containing protein 27 (1050 aa).

Residues 1 to 372 form a sufficient for GEF activity towards RAB21 region; sequence MALYDEDLLK…RQGSLSAKPP (372 aa). One can recognise a VPS9 domain in the interval 233–371; that stretch reads ASEDAAFNKI…IRQGSLSAKP (139 aa). ANK repeat units lie at residues 396–426, 462–491, 495–524, 528–560, 564–593, and 597–627; these read SPTD…DKDA, RGHT…VVNA, HGAT…SAEV, NGNT…RLDI, KGDT…SPEI, and LKET…RQKS. The sufficient for interaction with VPS29 stretch occupies residues 396–460; sequence SPTDCLFKHI…PSVVTPFSRD (65 aa). The tract at residues 451–600 is interaction with RAB38; sequence PSVVTPFSRD…PEIQNRLKET (150 aa). Positions 451–730 are interaction with RAB32; the sequence is PSVVTPFSRD…APAQKRLAKV (280 aa). The disordered stretch occupies residues 630–665; sequence APVQSLQRSVDSISQESSTSSFSSMSAGSRQEETKK. Over residues 638–658 the composition is skewed to low complexity; it reads SVDSISQESSTSSFSSMSAGS. A required for interaction with VAMP7 region spans residues 658-707; it reads SRQEETKKDYREVEKLLRAVADGDLEMVRYLLEWTEEDLEDAEDTVSAVD. ANK repeat units follow at residues 668 to 698, 743 to 772, 776 to 805, 809 to 838, and 842 to 871; these read REVE…DLED, DGSS…NAGA, DQAV…KPNK, SGNT…AINT, and KGNT…SVQV. A sufficient for interaction with VPS29 region spans residues 692–746; it reads TEEDLEDAEDTVSAVDPEFCHPLCQCPKCAPAQKRLAKVPASGLGVNVTSQDGSS. 2 positions are modified to phosphoserine: Ser-962 and Ser-970. The disordered stretch occupies residues 987-1050; the sequence is PAQSGSHAAE…TPQEVSASRS (64 aa). Residues 994–1007 show a composition bias toward basic and acidic residues; the sequence is AAEKGNSDWPERPR. Phosphothreonine is present on Thr-1023. Residues 1040–1050 show a composition bias toward polar residues; sequence STPQEVSASRS.

Interacts with RAB21 (GDP-bound form), VPS29, KIF5A, KIF5C, GOLGA4. Interacts with RAB32 (GTP-bound form), RAB38 (GTP-bound form), VAMP7. Interacts with low affinity with RAB5. ANKRD27:RAB32 heterodimers can homodimerize to form tetramers. Can interact with RAB38 or RAB32, VPS29 and VAMP7 simultaneously. A decreased interaction with RAB32 seen in the presence of SGSM2.

It is found in the early endosome. The protein localises to the late endosome. The protein resides in the cytoplasmic vesicle membrane. Its subcellular location is the lysosome. It localises to the cell membrane. It is found in the melanosome. In terms of biological role, may be a guanine exchange factor (GEF) for Rab21, Rab32 and Rab38 and regulate endosome dynamics. May regulate the participation of VAMP7 in membrane fusion events; in vitro inhibits VAMP7-mediated SNARE complex formation by trapping VAMP7 in a closed, fusogenically inactive conformation. Involved in peripheral melanosomal distribution of TYRP1 in melanocytes; the function, which probably is implicating vesicle-trafficking, includes cooperation with Rab32, Rab38 and VAMP7. Involved in the regulation of neurite growth; the function seems to require its GEF activity, probably towards Rab21, and VAMP7 but not Rab32/38. Proposed to be involved in Golgi sorting of VAMP7 and transport of VAMP7 vesicles to the cell surface; the function seems to implicate kinesin heavy chain isoform 5 proteins, GOLGA4, RAB21 and MACF1. Required for the colocalization of VAMP7 and Rab21, probably on TGN sites. Involved in GLUT1 endosome-to-plasma membrane trafficking; the function is dependent of association with VPS29. Regulates the proper trafficking of melanogenic enzymes TYR, TYRP1 and DCT/TYRP2 to melanosomes in melanocytes. The sequence is that of Ankyrin repeat domain-containing protein 27 (ANKRD27) from Pongo abelii (Sumatran orangutan).